A 70-amino-acid chain; its full sequence is Bowman-Birk type proteinase inhibitor A-II (70 aa).

Intrachain disulfides connect C11/C68, C12/C29, C15/C63, C17/C27, C36/C43, C40/C55, and C45/C53.

This sequence belongs to the Bowman-Birk serine protease inhibitor family.

Its function is as follows. These proteins inhibit trypsin and chymotrypsin, having 2 sites of interaction with trypsin. The site of interaction with chymotrypsin has not been determined but is not independent of the trypsin-reactive sites. The polypeptide is Bowman-Birk type proteinase inhibitor A-II (Arachis hypogaea (Peanut)).